The primary structure comprises 284 residues: Probable endonuclease 4 (284 aa).

Residues H69, H109, E145, D179, H182, H216, D229, H231, and E261 each coordinate Zn(2+).

Belongs to the AP endonuclease 2 family. Zn(2+) serves as cofactor.

The catalysed reaction is Endonucleolytic cleavage to 5'-phosphooligonucleotide end-products.. Functionally, endonuclease IV plays a role in DNA repair. It cleaves phosphodiester bonds at apurinic or apyrimidinic (AP) sites, generating a 3'-hydroxyl group and a 5'-terminal sugar phosphate. This Chlorobium phaeobacteroides (strain BS1) protein is Probable endonuclease 4.